The primary structure comprises 158 residues: tRNA (cytidine(34)-2'-O)-methyltransferase (158 aa).

S-adenosyl-L-methionine is bound by residues Gly-103, Ile-123, and Ser-131.

The protein belongs to the class IV-like SAM-binding methyltransferase superfamily. RNA methyltransferase TrmH family. TrmL subfamily. As to quaternary structure, homodimer.

Its subcellular location is the cytoplasm. The enzyme catalyses cytidine(34) in tRNA + S-adenosyl-L-methionine = 2'-O-methylcytidine(34) in tRNA + S-adenosyl-L-homocysteine + H(+). It carries out the reaction 5-carboxymethylaminomethyluridine(34) in tRNA(Leu) + S-adenosyl-L-methionine = 5-carboxymethylaminomethyl-2'-O-methyluridine(34) in tRNA(Leu) + S-adenosyl-L-homocysteine + H(+). Its function is as follows. Methylates the ribose at the nucleotide 34 wobble position in the two leucyl isoacceptors tRNA(Leu)(CmAA) and tRNA(Leu)(cmnm5UmAA). Catalyzes the methyl transfer from S-adenosyl-L-methionine to the 2'-OH of the wobble nucleotide. In Ancylobacter novellus (strain ATCC 8093 / DSM 506 / JCM 20403 / CCM 1077 / IAM 12100 / NBRC 12443 / NCIMB 10456) (Starkeya novella), this protein is tRNA (cytidine(34)-2'-O)-methyltransferase.